A 468-amino-acid chain; its full sequence is tRNA (guanine(37)-N(1))-methyltransferase 1 (468 aa).

Residues H207, 245-246 (DL), and 273-274 (DA) each bind S-adenosyl-L-methionine. Positions 301 to 348 (KEAAVSRGGETNSSGEEIRESNASINEPLGANKKPSGTTKTENGVGKD) are disordered. A compositionally biased stretch (polar residues) spans 309–325 (GETNSSGEEIRESNASI). Position 380 (N380) interacts with S-adenosyl-L-methionine.

It belongs to the class I-like SAM-binding methyltransferase superfamily. TRM5/TYW2 family. In terms of assembly, monomer.

It localises to the mitochondrion matrix. It is found in the nucleus. The protein localises to the cytoplasm. It catalyses the reaction guanosine(37) in tRNA + S-adenosyl-L-methionine = N(1)-methylguanosine(37) in tRNA + S-adenosyl-L-homocysteine + H(+). In terms of biological role, specifically methylates the N1 position of guanosine-37 in various cytoplasmic and mitochondrial tRNAs. Methylation is not dependent on the nature of the nucleoside 5' of the target nucleoside. This is the first step in the biosynthesis of wybutosine (yW), a modified base adjacent to the anticodon of tRNAs and required for accurate decoding. The polypeptide is tRNA (guanine(37)-N(1))-methyltransferase 1 (Arabidopsis thaliana (Mouse-ear cress)).